The following is a 264-amino-acid chain: tRNA (guanine-N(1)-)-methyltransferase (264 aa).

Residues Gly-125 and 145–150 contribute to the S-adenosyl-L-methionine site; that span reads LGDFVL.

The protein belongs to the RNA methyltransferase TrmD family. In terms of assembly, homodimer.

It is found in the cytoplasm. The enzyme catalyses guanosine(37) in tRNA + S-adenosyl-L-methionine = N(1)-methylguanosine(37) in tRNA + S-adenosyl-L-homocysteine + H(+). Its function is as follows. Specifically methylates guanosine-37 in various tRNAs. In Burkholderia lata (strain ATCC 17760 / DSM 23089 / LMG 22485 / NCIMB 9086 / R18194 / 383), this protein is tRNA (guanine-N(1)-)-methyltransferase.